Consider the following 306-residue polypeptide: Ribonuclease Z (306 aa).

The Zn(2+) site is built by histidine 63, histidine 65, aspartate 67, histidine 68, histidine 141, aspartate 211, and histidine 269. Aspartate 67 (proton acceptor) is an active-site residue.

The protein belongs to the RNase Z family. In terms of assembly, homodimer. It depends on Zn(2+) as a cofactor.

The catalysed reaction is Endonucleolytic cleavage of RNA, removing extra 3' nucleotides from tRNA precursor, generating 3' termini of tRNAs. A 3'-hydroxy group is left at the tRNA terminus and a 5'-phosphoryl group is left at the trailer molecule.. In terms of biological role, zinc phosphodiesterase, which displays some tRNA 3'-processing endonuclease activity. Probably involved in tRNA maturation, by removing a 3'-trailer from precursor tRNA. This Staphylococcus aureus (strain Mu3 / ATCC 700698) protein is Ribonuclease Z.